Here is a 321-residue protein sequence, read N- to C-terminus: MSKPVRMEPGVKLRDGDKMALIPVKFMPDPNEEVLRKPDWMRIKLPPSSQKIEHIKSTLRKNKLHSVCEEASCPNLAECFNHGTATFMIMGAICTRRCPFCDVAHGRPLALDPDEPKKLALTIKEMGLKYVVITSVDRDDLRDGGAQHFADCIKQIREHSPQTRIEILTPDFRGRMEQALEVFRETPPDVFNHNLETAPRMYRVARPGADYKWSLELLRRIKEMHPHVPTKSGVMMGLGETNEEIVQVLKDLREHGVNMLTLGQYLQPSRHHLPVKRYVPPAEFDELKDVAMGLGFSHAACGPFVRSSYHADLQAKGEEVK.

Residues cysteine 68, cysteine 73, cysteine 79, cysteine 94, cysteine 98, cysteine 101, and serine 308 each coordinate [4Fe-4S] cluster. One can recognise a Radical SAM core domain in the interval 80-297 (FNHGTATFMI…KDVAMGLGFS (218 aa)).

Belongs to the radical SAM superfamily. Lipoyl synthase family. Requires [4Fe-4S] cluster as cofactor.

It localises to the cytoplasm. The enzyme catalyses [[Fe-S] cluster scaffold protein carrying a second [4Fe-4S](2+) cluster] + N(6)-octanoyl-L-lysyl-[protein] + 2 oxidized [2Fe-2S]-[ferredoxin] + 2 S-adenosyl-L-methionine + 4 H(+) = [[Fe-S] cluster scaffold protein] + N(6)-[(R)-dihydrolipoyl]-L-lysyl-[protein] + 4 Fe(3+) + 2 hydrogen sulfide + 2 5'-deoxyadenosine + 2 L-methionine + 2 reduced [2Fe-2S]-[ferredoxin]. It functions in the pathway protein modification; protein lipoylation via endogenous pathway; protein N(6)-(lipoyl)lysine from octanoyl-[acyl-carrier-protein]: step 2/2. In terms of biological role, catalyzes the radical-mediated insertion of two sulfur atoms into the C-6 and C-8 positions of the octanoyl moiety bound to the lipoyl domains of lipoate-dependent enzymes, thereby converting the octanoylated domains into lipoylated derivatives. The sequence is that of Lipoyl synthase from Aeromonas hydrophila subsp. hydrophila (strain ATCC 7966 / DSM 30187 / BCRC 13018 / CCUG 14551 / JCM 1027 / KCTC 2358 / NCIMB 9240 / NCTC 8049).